The sequence spans 75 residues: UPF0154 protein SERP0914 (75 aa).

A helical transmembrane segment spans residues 3–23 (IWVAIILIVIALIAGLIGGFL).

Belongs to the UPF0154 family.

Its subcellular location is the membrane. The polypeptide is UPF0154 protein SERP0914 (Staphylococcus epidermidis (strain ATCC 35984 / DSM 28319 / BCRC 17069 / CCUG 31568 / BM 3577 / RP62A)).